The primary structure comprises 525 residues: NGFI-A-binding protein 2 (525 aa).

The segment at 1 to 31 (MHRAPSPTAEQPPGRGDNTRRTPQPRFKASA) is disordered. Ser6 carries the phosphoserine modification. The segment at 35-113 (ALPRTLGELQ…REWATNPGLF (79 aa)) is NCD1. Positions 135–238 (GTRKGSMSNG…GAGGGPDRLE (104 aa)) are disordered. A phosphoserine mark is found at Ser157, Ser159, Ser162, and Ser171. Gly residues predominate over residues 212–234 (AGGGVSEGPGVGGVAAGGAGGGP). Positions 267-356 (LLKLNKKLAR…SRQVARESTY (90 aa)) are NCD2. Residues 353 to 384 (ESTYLSSLKGSRLHSEELGGPPLKKLKQEVGE) are necessary for nuclear localization. Lys379 participates in a covalent cross-link: Glycyl lysine isopeptide (Lys-Gly) (interchain with G-Cter in SUMO1). Residues 381-416 (EVGEQSHNEIQQPPPGPESYAPPYRPSLEEDSASLS) are disordered. The residue at position 479 (Ser479) is a Phosphoserine. The tract at residues 501-525 (APGPHPALVEGRRSSVKVEAEASRQ) is disordered. Positions 510-525 (EGRRSSVKVEAEASRQ) are enriched in basic and acidic residues. Lys517 participates in a covalent cross-link: Glycyl lysine isopeptide (Lys-Gly) (interchain with G-Cter in SUMO1); alternate. Residue Lys517 forms a Glycyl lysine isopeptide (Lys-Gly) (interchain with G-Cter in SUMO2); alternate linkage.

This sequence belongs to the NAB family. As to quaternary structure, homomultimers may associate with EGR1 bound to DNA. In terms of processing, sumoylation by EGR2 represses EGR2 transcriptional activity in hindbrain. In terms of tissue distribution, highly expressed in brain and thymus, and at lower levels in spleen, kidney, heart and testis. Isoform 1 is predominantly expressed in testis, whereas isoform 3 is more abundant in thymus.

The protein localises to the nucleus. Functionally, acts as a transcriptional repressor for zinc finger transcription factors EGR1 and EGR2. Isoform 2 lacks repression ability. The chain is NGFI-A-binding protein 2 (Nab2) from Mus musculus (Mouse).